Here is a 798-residue protein sequence, read N- to C-terminus: Phenylalanine--tRNA ligase beta subunit (798 aa).

The 110-residue stretch at 39 to 148 (SKHLGGFVVG…VTLAVGASLL (110 aa)) folds into the tRNA-binding domain. A B5 domain is found at 401-476 (DWQKSIVLRP…RINGYDNIPA (76 aa)). 4 residues coordinate Mg(2+): D454, D460, E463, and E464. The FDX-ACB domain maps to 704-797 (SALQPLDRDF…VAKATGGELR (94 aa)).

The protein belongs to the phenylalanyl-tRNA synthetase beta subunit family. Type 1 subfamily. In terms of assembly, tetramer of two alpha and two beta subunits. It depends on Mg(2+) as a cofactor.

It localises to the cytoplasm. The enzyme catalyses tRNA(Phe) + L-phenylalanine + ATP = L-phenylalanyl-tRNA(Phe) + AMP + diphosphate + H(+). This is Phenylalanine--tRNA ligase beta subunit from Paramagnetospirillum magneticum (strain ATCC 700264 / AMB-1) (Magnetospirillum magneticum).